The chain runs to 554 residues: Chaperonin GroEL (554 aa).

ATP is bound by residues 29-32 (TLGP), Lys50, 86-90 (DGTTT), Gly414, and Asp495.

The protein belongs to the chaperonin (HSP60) family. As to quaternary structure, forms a cylinder of 14 subunits composed of two heptameric rings stacked back-to-back. Interacts with the co-chaperonin GroES.

Its subcellular location is the cytoplasm. The enzyme catalyses ATP + H2O + a folded polypeptide = ADP + phosphate + an unfolded polypeptide.. Its function is as follows. Together with its co-chaperonin GroES, plays an essential role in assisting protein folding. The GroEL-GroES system forms a nano-cage that allows encapsulation of the non-native substrate proteins and provides a physical environment optimized to promote and accelerate protein folding. The sequence is that of Chaperonin GroEL from Pelagibacter ubique (strain HTCC1062).